The following is a 956-amino-acid chain: Calsyntenin-3 (956 aa).

An N-terminal signal peptide occupies residues 1–19 (MTLLLLPLLLASLLASCSC). The Cytoplasmic segment spans residues 1–30 (MTLLLLPLLLASLLASCSCNKANKHKPWIE). Residues 20–847 (NKANKHKPWI…SHRNSMIPSA (828 aa)) are Extracellular-facing. Cadherin domains are found at residues 29–145 (IEAE…APVF) and 146–246 (VERL…KPSW). The segment at residues 31-51 (AEYQGIVMENDNTVLLNPPLF) is an intramembrane region (helical). Topologically, residues 52–71 (ALDKDAPLRYAGEICGFRLH) are cytoplasmic. The segment at residues 72 to 94 (GSGVPFEAVILDKATGEGLIRAK) is an intramembrane region (helical). Residues 95 to 151 (EPVDCEAQKEHTFTIQAYDCGEGPDGANTKKSHKATVHVRVNDVNEFAPVFVERLYR) are Cytoplasmic-facing. Residues 152–172 (AAVTEGKLYDRILRVEAIDGD) constitute an intramembrane region (helical). The Cytoplasmic portion of the chain corresponds to 173–255 (CSPQYSQICY…WQGWNKRIEY (83 aa)). The chain crosses the membrane as a helical span at residues 256–276 (APGAGSLALFPGIRLETCDEP). Residues 277 to 364 (LWNIQATIEL…PLGGPSGLGS (88 aa)) lie on the Lumenal side of the membrane. 5 N-linked (GlcNAc...) asparagine glycosylation sites follow: Asn299, Asn327, Asn347, Asn507, and Asn740. The helical transmembrane segment at 848-868 (ATLIIVVCVGFLVLMVVLGLV) threads the bilayer. Over 869–956 (RIHSLHRRVS…RIIETPPHRY (88 aa)) the chain is Cytoplasmic. The segment at 916–956 (QSCVTGAVGGQQEDEDSSDSEVADSPSSDERRIIETPPHRY) is disordered. The segment covering 927–937 (QEDEDSSDSEV) has biased composition (acidic residues). A compositionally biased stretch (basic and acidic residues) spans 943–956 (SDERRIIETPPHRY).

It belongs to the calsyntenin family. In terms of assembly, interacts (via cadherin domains) with both alpha and beta isoforms of neurexins (NRXN1, NRXN2 and NRXN3). Directly interacts with APBA2. Forms a tripartite complex with APBA2 and APP. Interacts with low affinity with KLC1. Interacts with SLC23A2/SVCT2. As to quaternary structure, interacts with CIDEA; inhibiting the lipid transferase activity of CIDEA. Interacts with CIDEC; inhibiting the lipid transferase activity of CIDEC. Proteolytically processed under normal cellular conditions. A primary zeta-cleavage generates a large extracellular (soluble) N-terminal domain (sAlc) and a short C-terminal transmembrane fragment (CTF1). A secondary cleavage catalyzed by gamma-secretase within the transmembrane domain releases the beta-Alc-beta chain in the extracellular milieu and produces an intracellular fragment (AlcICD). This processing is strongly suppressed in the tripartite complex formed with APBA2 and APP, which seems to prevent the association with gamma-secretase. Post-translationally, ubiquitinated: endoplasmic reticulum-localized protein is ubiquitinated and degraded by the endoplasmic reticulum-associated degradation (ERAD) pathway. In terms of tissue distribution, according to PubMed:12498782, expressed predominantly in the brain and in kidney. Low levels in heart, skeletal muscle, liver, placenta, pancreas and lung. According to PubMed:12972431, predominant expression in brain, and only marginal in kidney. In brain, present throughout all cortical layers, highest levels in GABAergic neurons (based on morphology and distribution pattern). As to expression, expression is restricted to adipose tissue, with high expression in multilocular thermogenic adipocytes (brown adipose tissue).

The protein localises to the postsynaptic cell membrane. It localises to the endoplasmic reticulum membrane. The protein resides in the golgi apparatus membrane. Its subcellular location is the cell projection. It is found in the dendrite. The protein localises to the lipid droplet. Postsynaptic adhesion molecule that binds to presynaptic neurexins to mediate both excitatory and inhibitory synapse formation. Promotes synapse development by acting as a cell adhesion molecule at the postsynaptic membrane, which associates with both neurexin-alpha and neurexin-beta proteins at the presynaptic membrane. Regulates the balance between excitatory and inhibitory synapses by inhibiting formation of excitatory parallel-fiber synapses and promoting formation of inhibitory synapses in the same neuron. May also be involved in ascorbate (vitamin C) uptake via its interaction with SLC23A2/SVCT2. Complex formation with APBA2 and APP, stabilizes APP metabolism and enhances APBA2-mediated suppression of beta-APP40 secretion, due to the retardation of intracellular APP maturation. Functionally, adipose-specific isoform that plays a key role in adaptive thermogenesis. Facilitates the efficient use of stored triglyceride by promoting multilocular morphology of thermogenic adipocytes: acts by inhibiting the activity of CIDEA and CIDEC on lipid droplets, thereby preventing lipid droplet fusion and facilitating lipid utilization. May also participate in adaptive thermogenesis by promoting sympathetic innervation of thermogenic adipose tissue: acts by driving secretion of neurotrophic factor S100B from brown adipocytes, stimulating neurite outgrowth from sympathetic neurons. The protein is Calsyntenin-3 of Homo sapiens (Human).